We begin with the raw amino-acid sequence, 926 residues long: Coatomer subunit beta'-2 (926 aa).

WD repeat units follow at residues 13-52 (QRSE…MAKS), 55-94 (VTEL…KVKV), 97-136 (AHSD…ACTQ), 140-180 (GHSH…PNFT), 183-224 (AHQK…CVQT), 227-266 (GHTH…LENT), 269-309 (YGLE…ASMD), 351-390 (TCDL…RSFG), and 461-501 (RIDV…SHFD). A disordered region spans residues 847 to 926 (EEESLENGDM…GTNNEGNPSA (80 aa)). Positions 868–887 (NEQRNEDDVAEHVEEHHEEK) are enriched in basic and acidic residues. Over residues 888–900 (EAEEEEGIVDGDS) the composition is skewed to acidic residues. Residues 917 to 926 (GTNNEGNPSA) are compositionally biased toward polar residues.

It belongs to the WD repeat COPB2 family. In terms of assembly, oligomeric complex that consists of at least the alpha, beta, beta', gamma, delta, epsilon and zeta subunits.

The protein localises to the cytoplasm. The protein resides in the golgi apparatus membrane. It is found in the cytoplasmic vesicle. Its subcellular location is the COPI-coated vesicle membrane. The coatomer is a cytosolic protein complex that binds to dilysine motifs and reversibly associates with Golgi non-clathrin-coated vesicles, which further mediate biosynthetic protein transport from the ER, via the Golgi up to the trans Golgi network. Coatomer complex is required for budding from Golgi membranes, and is essential for the retrograde Golgi-to-ER transport of dilysine-tagged proteins. The chain is Coatomer subunit beta'-2 from Arabidopsis thaliana (Mouse-ear cress).